Here is a 126-residue protein sequence, read N- to C-terminus: Histone H2B-alpha (126 aa).

Residues 1–34 (MSAAEKKPASKAPAGKAPRDTMKSADKKRGKNRK) form a disordered region. Residues K6 and K7 each carry the N6-acetyllysine; alternate modification. Residues K6 and K7 each participate in a glycyl lysine isopeptide (Lys-Gly) (interchain with G-Cter in SUMO); alternate cross-link. The residue at position 10 (S10) is a Phosphoserine. At K11 the chain carries N6-acetyllysine. Residues 17–27 (APRDTMKSADK) show a composition bias toward basic and acidic residues. Residue K120 forms a Glycyl lysine isopeptide (Lys-Gly) (interchain with G-Cter in ubiquitin) linkage.

It belongs to the histone H2B family. As to quaternary structure, the nucleosome is a histone octamer containing two molecules each of H2A, H2B, H3 and H4 assembled in one H3-H4 heterotetramer and two H2A-H2B heterodimers. The octamer wraps approximately 147 bp of DNA. Interacts with rik1. Post-translationally, monoubiquitinated by the rhp6/ubc2-bre1 complex to form H2BK123ub1. H2BK123ub1 gives a specific tag for epigenetic transcriptional activation and is also prerequisite for H3K4me and H3K79me formation. H2BK123ub1 also modulates the formation of double-strand breaks during meiosis and is a prerequisite for DNA-damage checkpoint activation. Phosphorylated by shk1 to form H2BS10ph during progression through meiotic prophase. May be correlated with chromosome condensation. In terms of processing, acetylation of N-terminal lysines and particularly formation of H2BK11ac has a positive effect on transcription. Post-translationally, sumoylation to form H2BK6su or H2BK7su occurs preferentially near the telomeres and represses gene transcription.

Its subcellular location is the nucleus. The protein localises to the chromosome. Core component of nucleosome. Nucleosomes wrap and compact DNA into chromatin, limiting DNA accessibility to the cellular machineries which require DNA as a template. Histones thereby play a central role in transcription regulation, DNA repair, DNA replication and chromosomal stability. DNA accessibility is regulated via a complex set of post-translational modifications of histones, also called histone code, and nucleosome remodeling. The polypeptide is Histone H2B-alpha (htb1) (Schizosaccharomyces pombe (strain 972 / ATCC 24843) (Fission yeast)).